The following is a 229-amino-acid chain: Ribonuclease 3 (229 aa).

Residues 5 to 127 (LARLERKLGY…LIGAIYLDAD (123 aa)) enclose the RNase III domain. Glu-40 is a binding site for Mg(2+). The active site involves Asp-44. Mg(2+)-binding residues include Asp-113 and Glu-116. Glu-116 is an active-site residue. Positions 154–224 (DPKTRLQEFL…AAAALIALGV (71 aa)) constitute a DRBM domain.

It belongs to the ribonuclease III family. As to quaternary structure, homodimer. It depends on Mg(2+) as a cofactor.

Its subcellular location is the cytoplasm. The catalysed reaction is Endonucleolytic cleavage to 5'-phosphomonoester.. Functionally, digests double-stranded RNA. Involved in the processing of primary rRNA transcript to yield the immediate precursors to the large and small rRNAs (23S and 16S). Processes some mRNAs, and tRNAs when they are encoded in the rRNA operon. Processes pre-crRNA and tracrRNA of type II CRISPR loci if present in the organism. This is Ribonuclease 3 from Pseudomonas putida (strain W619).